Reading from the N-terminus, the 416-residue chain is Gamma-glutamyl phosphate reductase (416 aa).

It belongs to the gamma-glutamyl phosphate reductase family.

The protein resides in the cytoplasm. It carries out the reaction L-glutamate 5-semialdehyde + phosphate + NADP(+) = L-glutamyl 5-phosphate + NADPH + H(+). It participates in amino-acid biosynthesis; L-proline biosynthesis; L-glutamate 5-semialdehyde from L-glutamate: step 2/2. Its function is as follows. Catalyzes the NADPH-dependent reduction of L-glutamate 5-phosphate into L-glutamate 5-semialdehyde and phosphate. The product spontaneously undergoes cyclization to form 1-pyrroline-5-carboxylate. This chain is Gamma-glutamyl phosphate reductase, found in Petrotoga mobilis (strain DSM 10674 / SJ95).